Consider the following 418-residue polypeptide: Serine hydroxymethyltransferase (418 aa).

(6S)-5,6,7,8-tetrahydrofolate is bound by residues L121 and 125–127 (GHL). At K230 the chain carries N6-(pyridoxal phosphate)lysine. 356 to 358 (SPF) provides a ligand contact to (6S)-5,6,7,8-tetrahydrofolate.

The protein belongs to the SHMT family. In terms of assembly, homodimer. Requires pyridoxal 5'-phosphate as cofactor.

It localises to the cytoplasm. It carries out the reaction (6R)-5,10-methylene-5,6,7,8-tetrahydrofolate + glycine + H2O = (6S)-5,6,7,8-tetrahydrofolate + L-serine. It participates in one-carbon metabolism; tetrahydrofolate interconversion. Its pathway is amino-acid biosynthesis; glycine biosynthesis; glycine from L-serine: step 1/1. Functionally, catalyzes the reversible interconversion of serine and glycine with tetrahydrofolate (THF) serving as the one-carbon carrier. This reaction serves as the major source of one-carbon groups required for the biosynthesis of purines, thymidylate, methionine, and other important biomolecules. Also exhibits THF-independent aldolase activity toward beta-hydroxyamino acids, producing glycine and aldehydes, via a retro-aldol mechanism. The chain is Serine hydroxymethyltransferase from Shewanella pealeana (strain ATCC 700345 / ANG-SQ1).